We begin with the raw amino-acid sequence, 465 residues long: Putative subtilisin-like proteinase 1 (465 aa).

Residues 1 to 17 (MILAIISLSVVICREVS) form the signal peptide. Positions 19-90 (YIVMFDQDPS…VKMVVKDSPV (72 aa)) constitute an Inhibitor I9 domain. Residues 115-447 (PWGLARVGGS…PSLFNANKKK (333 aa)) form the Peptidase S8 domain. Active-site charge relay system residues include D148 and H180. Residues C329 and C360 are joined by a disulfide bond. Residue S386 is the Charge relay system of the active site.

The protein belongs to the peptidase S8 family.

The protein localises to the secreted. Its subcellular location is the extracellular space. Its function is as follows. May be involved in the degradation of proteins for nutrient acquisition or possess a regulatory function by proteolytic activation of proproteins. This is Putative subtilisin-like proteinase 1 (SPL1) from Encephalitozoon cuniculi (strain GB-M1) (Microsporidian parasite).